We begin with the raw amino-acid sequence, 233 residues long: Probable chemoreceptor glutamine deamidase CheD (233 aa).

Belongs to the CheD family.

The enzyme catalyses L-glutaminyl-[protein] + H2O = L-glutamyl-[protein] + NH4(+). Probably deamidates glutamine residues to glutamate on methyl-accepting chemotaxis receptors (MCPs), playing an important role in chemotaxis. The sequence is that of Probable chemoreceptor glutamine deamidase CheD from Ralstonia nicotianae (strain ATCC BAA-1114 / GMI1000) (Ralstonia solanacearum).